The chain runs to 270 residues: tRNA pseudouridine synthase A (270 aa).

The active-site Nucleophile is aspartate 52. Substrate is bound at residue tyrosine 110.

The protein belongs to the tRNA pseudouridine synthase TruA family. Homodimer.

It catalyses the reaction uridine(38/39/40) in tRNA = pseudouridine(38/39/40) in tRNA. In terms of biological role, formation of pseudouridine at positions 38, 39 and 40 in the anticodon stem and loop of transfer RNAs. This is tRNA pseudouridine synthase A from Paraburkholderia xenovorans (strain LB400).